Here is a 661-residue protein sequence, read N- to C-terminus: DNA cross-link repair protein PSO2/SNM1 (661 aa).

The interval 1 to 44 (MSRKSIVQIRRSEVKRKRSSTASSTSEGKTLHKNTHTSSKRQRT) is disordered. Over residues 31-43 (LHKNTHTSSKRQR) the composition is skewed to basic residues. The UBZ4-type zinc finger occupies 144–174 (VIQCPICLENLSHLELYERETHCDTCIGSDP). 4 residues coordinate Zn(2+): Cys147, Cys150, His165, and Cys169.

The protein belongs to the DNA repair metallo-beta-lactamase (DRMBL) family.

Its subcellular location is the nucleus. Required for DNA interstrand cross-link repair. This requires cleavage of cross-linked DNA to generate DNA double strand breaks (DSBs). This protein has 5' exonuclease activity on single-stranded and double-stranded DNA, which appears to be necessary for the processing of DNA double strand breaks prior to ligation. The sequence is that of DNA cross-link repair protein PSO2/SNM1 (PSO2) from Saccharomyces cerevisiae (strain ATCC 204508 / S288c) (Baker's yeast).